Reading from the N-terminus, the 115-residue chain is UPF0295 protein BLi00901/BL05075 (115 aa).

Helical transmembrane passes span 18-38 (LVFIGFIIMYVGVFFRSSVLL) and 41-61 (VFMILGVLSILLSTAVYFWIG).

It belongs to the UPF0295 family.

It is found in the cell membrane. This chain is UPF0295 protein BLi00901/BL05075, found in Bacillus licheniformis (strain ATCC 14580 / DSM 13 / JCM 2505 / CCUG 7422 / NBRC 12200 / NCIMB 9375 / NCTC 10341 / NRRL NRS-1264 / Gibson 46).